Here is a 130-residue protein sequence, read N- to C-terminus: Ribosome-binding factor A (130 aa).

This sequence belongs to the RbfA family. As to quaternary structure, monomer. Binds 30S ribosomal subunits, but not 50S ribosomal subunits or 70S ribosomes.

It localises to the cytoplasm. Its function is as follows. One of several proteins that assist in the late maturation steps of the functional core of the 30S ribosomal subunit. Associates with free 30S ribosomal subunits (but not with 30S subunits that are part of 70S ribosomes or polysomes). Required for efficient processing of 16S rRNA. May interact with the 5'-terminal helix region of 16S rRNA. This chain is Ribosome-binding factor A, found in Prochlorococcus marinus (strain MIT 9312).